Here is a 41-residue protein sequence, read N- to C-terminus: Large ribosomal subunit protein bL36 (41 aa).

This sequence belongs to the bacterial ribosomal protein bL36 family.

In Methylorubrum extorquens (strain CM4 / NCIMB 13688) (Methylobacterium extorquens), this protein is Large ribosomal subunit protein bL36.